The following is a 556-amino-acid chain: 2-succinyl-5-enolpyruvyl-6-hydroxy-3-cyclohexene-1-carboxylate synthase (556 aa).

The protein belongs to the TPP enzyme family. MenD subfamily. Homodimer. Requires Mg(2+) as cofactor. The cofactor is Mn(2+). Thiamine diphosphate serves as cofactor.

It carries out the reaction isochorismate + 2-oxoglutarate + H(+) = 5-enolpyruvoyl-6-hydroxy-2-succinyl-cyclohex-3-ene-1-carboxylate + CO2. The protein operates within quinol/quinone metabolism; 1,4-dihydroxy-2-naphthoate biosynthesis; 1,4-dihydroxy-2-naphthoate from chorismate: step 2/7. It participates in quinol/quinone metabolism; menaquinone biosynthesis. Functionally, catalyzes the thiamine diphosphate-dependent decarboxylation of 2-oxoglutarate and the subsequent addition of the resulting succinic semialdehyde-thiamine pyrophosphate anion to isochorismate to yield 2-succinyl-5-enolpyruvyl-6-hydroxy-3-cyclohexene-1-carboxylate (SEPHCHC). The protein is 2-succinyl-5-enolpyruvyl-6-hydroxy-3-cyclohexene-1-carboxylate synthase of Salmonella gallinarum (strain 287/91 / NCTC 13346).